The primary structure comprises 565 residues: Proline--tRNA ligase (565 aa).

The protein belongs to the class-II aminoacyl-tRNA synthetase family. ProS type 1 subfamily. In terms of assembly, homodimer.

Its subcellular location is the cytoplasm. It carries out the reaction tRNA(Pro) + L-proline + ATP = L-prolyl-tRNA(Pro) + AMP + diphosphate. Catalyzes the attachment of proline to tRNA(Pro) in a two-step reaction: proline is first activated by ATP to form Pro-AMP and then transferred to the acceptor end of tRNA(Pro). As ProRS can inadvertently accommodate and process non-cognate amino acids such as alanine and cysteine, to avoid such errors it has two additional distinct editing activities against alanine. One activity is designated as 'pretransfer' editing and involves the tRNA(Pro)-independent hydrolysis of activated Ala-AMP. The other activity is designated 'posttransfer' editing and involves deacylation of mischarged Ala-tRNA(Pro). The misacylated Cys-tRNA(Pro) is not edited by ProRS. In Lactobacillus helveticus (strain DPC 4571), this protein is Proline--tRNA ligase.